We begin with the raw amino-acid sequence, 649 residues long: Centrosomal protein of 63 kDa-A (649 aa).

Coiled-coil stretches lie at residues 19-185 (DSCE…YQHQ) and 222-556 (EEEL…DAAS). Serine 560 is subject to Phosphoserine; by atm and atr. A coiled-coil region spans residues 612-645 (FLQEEEQRSHELLQRLNAHIEELKQESQRTVEHF).

This sequence belongs to the CEP63 family. Post-translationally, phosphorylation at Ser-560 by atm and atr promotes its delocalization from the centrosome and impairs its ability to promote centrosome dependent spindle assembly.

It is found in the cytoplasm. It localises to the cytoskeleton. The protein localises to the microtubule organizing center. Its subcellular location is the centrosome. The protein resides in the centriole. Required for normal spindle assembly. Plays a key role in mother-centriole-dependent centriole duplication. Plays a role in DNA damage response. Following DNA damage, such as double-strand breaks (DSBs), is removed from centrosomes; this leads to the inactivation of spindle assembly and delay in mitotic progression. This is Centrosomal protein of 63 kDa-A (cep63-a) from Xenopus laevis (African clawed frog).